Reading from the N-terminus, the 293-residue chain is Elongation factor Ts (293 aa).

Residues 80-83 (TDFV) form an involved in Mg(2+) ion dislocation from EF-Tu region.

It belongs to the EF-Ts family.

Its subcellular location is the cytoplasm. In terms of biological role, associates with the EF-Tu.GDP complex and induces the exchange of GDP to GTP. It remains bound to the aminoacyl-tRNA.EF-Tu.GTP complex up to the GTP hydrolysis stage on the ribosome. This chain is Elongation factor Ts, found in Paraburkholderia phymatum (strain DSM 17167 / CIP 108236 / LMG 21445 / STM815) (Burkholderia phymatum).